The primary structure comprises 247 residues: Probable transcriptional regulatory protein LAF_0541 (247 aa).

Residues 1–22 (MSGHSKWHNIQGRKNAQDAKRG) are disordered.

This sequence belongs to the TACO1 family.

It is found in the cytoplasm. This is Probable transcriptional regulatory protein LAF_0541 from Limosilactobacillus fermentum (strain NBRC 3956 / LMG 18251) (Lactobacillus fermentum).